We begin with the raw amino-acid sequence, 230 residues long: tRNA (guanine-N(7)-)-methyltransferase (230 aa).

4 residues coordinate S-adenosyl-L-methionine: E61, E86, D113, and D135. D135 is an active-site residue. Substrate is bound by residues K139, D171, and 209-212 (TRYE).

Belongs to the class I-like SAM-binding methyltransferase superfamily. TrmB family.

The catalysed reaction is guanosine(46) in tRNA + S-adenosyl-L-methionine = N(7)-methylguanosine(46) in tRNA + S-adenosyl-L-homocysteine. Its pathway is tRNA modification; N(7)-methylguanine-tRNA biosynthesis. In terms of biological role, catalyzes the formation of N(7)-methylguanine at position 46 (m7G46) in tRNA. The protein is tRNA (guanine-N(7)-)-methyltransferase of Azorhizobium caulinodans (strain ATCC 43989 / DSM 5975 / JCM 20966 / LMG 6465 / NBRC 14845 / NCIMB 13405 / ORS 571).